We begin with the raw amino-acid sequence, 299 residues long: Glutamyl-Q tRNA(Asp) synthetase (299 aa).

L-glutamate-binding positions include 9-13 and Glu-45; that span reads RFAPS. Residues 12-22 carry the 'HIGH' region motif; sequence PSPTGPLHFGS. Zn(2+) contacts are provided by Cys-101, Cys-103, and Cys-118. L-glutamate is bound by residues Tyr-170 and Arg-188. The short motif at 226 to 230 is the 'KMSKS' region element; the sequence is KLSKS. Lys-229 serves as a coordination point for ATP. Positions 279–299 are disordered; it reads QLLPRQRQRDRATCAYERQRD. Basic and acidic residues predominate over residues 285–299; sequence RQRDRATCAYERQRD.

The protein belongs to the class-I aminoacyl-tRNA synthetase family. GluQ subfamily. Zn(2+) serves as cofactor.

Catalyzes the tRNA-independent activation of glutamate in presence of ATP and the subsequent transfer of glutamate onto a tRNA(Asp). Glutamate is transferred on the 2-amino-5-(4,5-dihydroxy-2-cyclopenten-1-yl) moiety of the queuosine in the wobble position of the QUC anticodon. This is Glutamyl-Q tRNA(Asp) synthetase from Xanthomonas oryzae pv. oryzae (strain KACC10331 / KXO85).